The following is a 74-amino-acid chain: Conotoxin AbVIA (74 aa).

The first 17 residues, 1 to 17 (VLIIAVLFLTACQLTTA), serve as a signal peptide directing secretion. Residues 18 to 38 (VTSSRGEQKHRALRSTDKKFK) constitute a propeptide that is removed on maturation. Disulfide bonds link Cys-43/Cys-57, Cys-50/Cys-61, and Cys-56/Cys-68. Ser-73 carries the serine amide modification.

Belongs to the conotoxin O1 superfamily. As to expression, expressed by the venom duct.

The protein resides in the secreted. The sequence is that of Conotoxin AbVIA from Conus abbreviatus (Abbreviated cone).